The sequence spans 251 residues: MENIITSKDVHLSYGNVEALHGISLDFEEKELTALIGPSGCGKSTFLRCLNRMNDDIPNIHISGEIKFENKNIYGPKMDLVELRKDVGMVFQQPSPFPFSVYDNIAYGLRIAGIKDKELIDQRVEESLKQAAIWKETKDNLDRNAQAFSGGQQQRICIARALAVRPKVVLLDEPTSALDPISSSEIEETLLELKHDFTFIMVTHNLQQASRISDYTAFLMSGDLIEYGKTSDMFMNPKKQITSDYLNGRFG.

The ABC transporter domain occupies Ile-5 to Leu-246. Residue Gly-37–Ser-44 coordinates ATP.

This sequence belongs to the ABC transporter superfamily. Phosphate importer (TC 3.A.1.7) family. As to quaternary structure, the complex is composed of two ATP-binding proteins (PstB), two transmembrane proteins (PstC and PstA) and a solute-binding protein (PstS).

The protein resides in the cell membrane. The enzyme catalyses phosphate(out) + ATP + H2O = ADP + 2 phosphate(in) + H(+). Its function is as follows. Part of the ABC transporter complex PstSACB involved in phosphate import. Responsible for energy coupling to the transport system. In Lactobacillus johnsonii (strain CNCM I-12250 / La1 / NCC 533), this protein is Phosphate import ATP-binding protein PstB 2.